A 415-amino-acid chain; its full sequence is Serine hydroxymethyltransferase 2 (415 aa).

(6S)-5,6,7,8-tetrahydrofolate-binding positions include Leu122 and 126–128 (GHL). Position 230 is an N6-(pyridoxal phosphate)lysine (Lys230).

This sequence belongs to the SHMT family. Homodimer. Requires pyridoxal 5'-phosphate as cofactor.

It is found in the cytoplasm. It catalyses the reaction (6R)-5,10-methylene-5,6,7,8-tetrahydrofolate + glycine + H2O = (6S)-5,6,7,8-tetrahydrofolate + L-serine. The protein operates within one-carbon metabolism; tetrahydrofolate interconversion. It functions in the pathway amino-acid biosynthesis; glycine biosynthesis; glycine from L-serine: step 1/1. Catalyzes the reversible interconversion of serine and glycine with tetrahydrofolate (THF) serving as the one-carbon carrier. This reaction serves as the major source of one-carbon groups required for the biosynthesis of purines, thymidylate, methionine, and other important biomolecules. Also exhibits THF-independent aldolase activity toward beta-hydroxyamino acids, producing glycine and aldehydes, via a retro-aldol mechanism. The sequence is that of Serine hydroxymethyltransferase 2 from Burkholderia lata (strain ATCC 17760 / DSM 23089 / LMG 22485 / NCIMB 9086 / R18194 / 383).